A 151-amino-acid polypeptide reads, in one-letter code: Transcriptional repressor NrdR (151 aa).

Residues 3–34 (CPFCNSVDTSVKNSRPSDCKMSVRRRRSCDSC) fold into a zinc finger. In terms of domain architecture, ATP-cone spans 49-139 (VKVLKKDGSV…VYMNFSDVND (91 aa)).

Belongs to the NrdR family. Zn(2+) serves as cofactor.

Its function is as follows. Negatively regulates transcription of bacterial ribonucleotide reductase nrd genes and operons by binding to NrdR-boxes. This is Transcriptional repressor NrdR from Anaplasma marginale (strain Florida).